The primary structure comprises 229 residues: ATP-dependent dethiobiotin synthetase BioD (229 aa).

12–17 (GVGKTV) provides a ligand contact to ATP. Thr-16 contributes to the Mg(2+) binding site. Residue Lys-37 is part of the active site. Thr-41 serves as a coordination point for substrate. Residues Asp-53, 112–115 (EGAG), and 201–203 (PAG) each bind ATP. Mg(2+) contacts are provided by Asp-53 and Glu-112.

Belongs to the dethiobiotin synthetase family. In terms of assembly, homodimer. Mg(2+) serves as cofactor.

It localises to the cytoplasm. It carries out the reaction (7R,8S)-7,8-diammoniononanoate + CO2 + ATP = (4R,5S)-dethiobiotin + ADP + phosphate + 3 H(+). Its pathway is cofactor biosynthesis; biotin biosynthesis; biotin from 7,8-diaminononanoate: step 1/2. Catalyzes a mechanistically unusual reaction, the ATP-dependent insertion of CO2 between the N7 and N8 nitrogen atoms of 7,8-diaminopelargonic acid (DAPA, also called 7,8-diammoniononanoate) to form a ureido ring. The protein is ATP-dependent dethiobiotin synthetase BioD of Mycobacterium sp. (strain JLS).